The chain runs to 139 residues: D-ribose pyranase (139 aa).

Histidine 20 acts as the Proton donor in catalysis. Substrate is bound by residues aspartate 28, histidine 106, and 128 to 130 (YAN).

The protein belongs to the RbsD / FucU family. RbsD subfamily. In terms of assembly, homodecamer.

The protein localises to the cytoplasm. The enzyme catalyses beta-D-ribopyranose = beta-D-ribofuranose. The protein operates within carbohydrate metabolism; D-ribose degradation; D-ribose 5-phosphate from beta-D-ribopyranose: step 1/2. Functionally, catalyzes the interconversion of beta-pyran and beta-furan forms of D-ribose. The chain is D-ribose pyranase from Escherichia coli (strain 55989 / EAEC).